The following is a 798-amino-acid chain: uncharacterized protein (798 aa).

Residues 432-573 are disordered; sequence KLTDNLSNKS…KNKAYRGRRV (142 aa). 4 stretches are compositionally biased toward low complexity: residues 438-449, 456-465, 473-487, and 495-510; these read SNKSSNDNTSET, RSSNSRNSDN, SKTQ…SRIP, and STNS…SDVY. The span at 519 to 529 shows a compositional bias: polar residues; that stretch reads PSRSTYKSRTI. A compositionally biased stretch (low complexity) spans 535–547; that stretch reads ESSPVSSRTSSPV. The segment covering 548-562 has biased composition (basic and acidic residues); the sequence is DDSRLKQSRISEDKP. Residues 563-572 are compositionally biased toward basic residues; that stretch reads RKNKAYRGRR.

The protein localises to the virion. This is an uncharacterized protein from Acanthamoeba polyphaga (Amoeba).